Consider the following 386-residue polypeptide: Succinate--CoA ligase [ADP-forming] subunit beta (386 aa).

The region spanning 9–244 is the ATP-grasp domain; sequence KEILRKYGVP…HDEEDPLETR (236 aa). ATP contacts are provided by residues lysine 46, 53–55, glutamate 99, cysteine 102, and glutamate 107; that span reads GRG. Residues asparagine 199 and aspartate 213 each contribute to the Mg(2+) site. Substrate contacts are provided by residues asparagine 264 and 321–323; that span reads GIM.

Belongs to the succinate/malate CoA ligase beta subunit family. Heterotetramer of two alpha and two beta subunits. It depends on Mg(2+) as a cofactor.

The enzyme catalyses succinate + ATP + CoA = succinyl-CoA + ADP + phosphate. The catalysed reaction is GTP + succinate + CoA = succinyl-CoA + GDP + phosphate. It functions in the pathway carbohydrate metabolism; tricarboxylic acid cycle; succinate from succinyl-CoA (ligase route): step 1/1. In terms of biological role, succinyl-CoA synthetase functions in the citric acid cycle (TCA), coupling the hydrolysis of succinyl-CoA to the synthesis of either ATP or GTP and thus represents the only step of substrate-level phosphorylation in the TCA. The beta subunit provides nucleotide specificity of the enzyme and binds the substrate succinate, while the binding sites for coenzyme A and phosphate are found in the alpha subunit. This is Succinate--CoA ligase [ADP-forming] subunit beta from Rickettsia typhi (strain ATCC VR-144 / Wilmington).